The chain runs to 558 residues: Trehalase 1 (558 aa).

It belongs to the glycosyl hydrolase 15 family.

It carries out the reaction alpha,alpha-trehalose + H2O = alpha-D-glucose + beta-D-glucose. Its pathway is glycan degradation; trehalose degradation; D-glucose from alpha,alpha-trehalose: step 1/1. Functionally, catalyzes the hydrolysis of alpha,alpha-trehalose into two molecules of D-glucose. The polypeptide is Trehalase 1 (treH1) (Sulfolobus acidocaldarius (strain ATCC 33909 / DSM 639 / JCM 8929 / NBRC 15157 / NCIMB 11770)).